The chain runs to 440 residues: Histidinol dehydrogenase homolog 2 (440 aa).

His265 is a Zn(2+) binding site. Active-site proton acceptor residues include Glu333 and His334. Residue His426 coordinates Zn(2+).

The protein belongs to the histidinol dehydrogenase family. It depends on Zn(2+) as a cofactor.

The chain is Histidinol dehydrogenase homolog 2 from Mesorhizobium japonicum (strain LMG 29417 / CECT 9101 / MAFF 303099) (Mesorhizobium loti (strain MAFF 303099)).